The chain runs to 426 residues: Enolase (426 aa).

Glutamine 163 is a (2R)-2-phosphoglycerate binding site. The active-site Proton donor is glutamate 205. Residues aspartate 242, glutamate 283, and aspartate 310 each contribute to the Mg(2+) site. (2R)-2-phosphoglycerate is bound by residues lysine 335, arginine 364, serine 365, and lysine 386. The Proton acceptor role is filled by lysine 335.

This sequence belongs to the enolase family. Mg(2+) serves as cofactor.

Its subcellular location is the cytoplasm. It localises to the secreted. It is found in the cell surface. It catalyses the reaction (2R)-2-phosphoglycerate = phosphoenolpyruvate + H2O. Its pathway is carbohydrate degradation; glycolysis; pyruvate from D-glyceraldehyde 3-phosphate: step 4/5. Catalyzes the reversible conversion of 2-phosphoglycerate (2-PG) into phosphoenolpyruvate (PEP). It is essential for the degradation of carbohydrates via glycolysis. This chain is Enolase, found in Leifsonia xyli subsp. xyli (strain CTCB07).